We begin with the raw amino-acid sequence, 343 residues long: Galactoside alpha-(1,2)-fucosyltransferase 2 (343 aa).

Residues 1 to 14 are Cytoplasmic-facing; sequence MLVVQMPFSFPVAH. Residues 15–28 traverse the membrane as a helical; Signal-anchor for type II membrane protein segment; it reads FILFVFTVSTIFHI. Topologically, residues 29-343 are lumenal; sequence QQRLAKIQAM…AADLSPLLKH (315 aa). N-linked (GlcNAc...) asparagine glycans are attached at residues Asn-188, Asn-282, and Asn-308.

This sequence belongs to the glycosyltransferase 11 family.

It is found in the golgi apparatus. Its subcellular location is the golgi stack membrane. The enzyme catalyses a beta-D-galactosyl-(1-&gt;3)-N-acetyl-beta-D-glucosaminyl derivative + GDP-beta-L-fucose = an alpha-L-Fuc-(1-&gt;2)-beta-D-Gal-(1-&gt;3)-beta-D-GlcNAc derivative + GDP + H(+). It catalyses the reaction a beta-D-galactosyl-(1-&gt;4)-N-acetyl-beta-D-glucosaminyl derivative + GDP-beta-L-fucose = an alpha-L-Fuc-(1-&gt;2)-beta-D-Gal-(1-&gt;4)-beta-D-GlcNAc derivative + GDP + H(+). It carries out the reaction a neolactoside nLc4Cer + GDP-beta-L-fucose = a neolactoside IV(2)-alpha-Fuc-nLc4Cer + GDP + H(+). The catalysed reaction is a neolactoside nLc4Cer(d18:1(4E)) + GDP-beta-L-fucose = a neolactoside IV(2)-alpha-Fuc-nLc4Cer(d18:1(4E)) + GDP + H(+). The enzyme catalyses a ganglioside GM1 + GDP-beta-L-fucose = a ganglioside Fuc-GM1 + GDP + H(+). It catalyses the reaction a ganglioside GA1 + GDP-beta-L-fucose = a ganglioside Fuc-GA1 + GDP + H(+). It carries out the reaction Lc4Cer + GDP-beta-L-fucose = alpha-L-fucosyl-(1-&gt;2)-beta-D-galactosyl-(1-&gt;3)-N-acetyl-beta-D-glucosaminyl-(1-&gt;3)-beta-D-galactosyl-(1-&gt;4)-beta-D-glucosyl-(1&lt;-&gt;1')-ceramide + GDP + H(+). The catalysed reaction is a beta-D-Gal-(1-&gt;3)-beta-D-GlcNAc-(1-&gt;3)-beta-D-Gal-(1-&gt;4)-beta-D-Glc-(1&lt;-&gt;1')-Cer(d18:1(4E)) + GDP-beta-L-fucose = alpha-L-fucosyl-(1-&gt;2)- beta-D-galactosyl-(1-&gt;3)-N-acetyl-beta-D-glucosaminyl-(1-&gt;3)-beta-D-galactosyl-(1-&gt;4)-beta-D-glucosyl-(1&lt;-&gt;1')-N-acylsphing-4-enine + GDP + H(+). The enzyme catalyses a ganglioside GD1b + GDP-beta-L-fucose = a ganglioside Fuc-GD1b + GDP + H(+). It catalyses the reaction a ganglioside GM1 (d18:1(4E)) + GDP-beta-L-fucose = a ganglioside Fuc-GM1 (d18:1(4E)) + GDP + H(+). It carries out the reaction a globoside GalGb4Cer (d18:1(4E)) + GDP-beta-L-fucose = a globoside Globo-H (d18:1(4E)) + GDP + H(+). The catalysed reaction is a lactoside III(4)-a-Fuc-Lc4Cer + GDP-beta-L-fucose = a lactoside IV(2),III(4)-a-[Fuc]2-Lc4Cer + GDP + H(+). The enzyme catalyses beta-D-galactosyl-(1-&gt;3)-N-acetyl-D-galactosamine + GDP-beta-L-fucose = alpha-L-fucosyl-(1-&gt;2)-beta-D-galactosyl-(1-&gt;3)-N-acetyl-D-galactosamine + GDP + H(+). Its pathway is protein modification; protein glycosylation. In terms of biological role, catalyzes the transfer of L-fucose, from a guanosine diphosphate-beta-L-fucose, to the terminal galactose on both O- and N-linked glycans chains of cell surface glycoproteins and glycolipids and the resulting epitope regulates several processes such as cell-cell interaction including host-microbe interaction, cell surface expression and cell proliferation. Preferentially fucosylates gangliosides GA1 and GM1 in the antrum, cecum and colon and in the female reproductive organs. Fucosylated host glycoproteins or glycolipids mediate interaction with intestinal microbiota influencing its composition. Creates a soluble precursor oligosaccharide FuC-alpha ((1,2)Galbeta-) called the H antigen which is an essential substrate for the final step in the soluble ABO blood group antigen synthesis pathway. This is Galactoside alpha-(1,2)-fucosyltransferase 2 from Pongo pygmaeus (Bornean orangutan).